Consider the following 421-residue polypeptide: Serine--tRNA ligase (421 aa).

230 to 232 (TAE) lines the L-serine pocket. 261–263 (RRE) is a binding site for ATP. Glu284 is an L-serine binding site. Residue 348–351 (EISS) participates in ATP binding. Ser383 is a binding site for L-serine.

The protein belongs to the class-II aminoacyl-tRNA synthetase family. Type-1 seryl-tRNA synthetase subfamily. As to quaternary structure, homodimer. The tRNA molecule binds across the dimer.

It localises to the cytoplasm. The enzyme catalyses tRNA(Ser) + L-serine + ATP = L-seryl-tRNA(Ser) + AMP + diphosphate + H(+). The catalysed reaction is tRNA(Sec) + L-serine + ATP = L-seryl-tRNA(Sec) + AMP + diphosphate + H(+). It participates in aminoacyl-tRNA biosynthesis; selenocysteinyl-tRNA(Sec) biosynthesis; L-seryl-tRNA(Sec) from L-serine and tRNA(Sec): step 1/1. Catalyzes the attachment of serine to tRNA(Ser). Is also able to aminoacylate tRNA(Sec) with serine, to form the misacylated tRNA L-seryl-tRNA(Sec), which will be further converted into selenocysteinyl-tRNA(Sec). This is Serine--tRNA ligase from Finegoldia magna (strain ATCC 29328 / DSM 20472 / WAL 2508) (Peptostreptococcus magnus).